The following is a 134-amino-acid chain: DNA-binding protein inhibitor ID-2 (134 aa).

Phosphoserine occurs at positions 14 and 25. The bHLH domain occupies 23–75; the sequence is SRSKTPVDDPMSLLYNMNDCYSKLKELVPSIPQNKKVTKMEILQHVIDYILDL. Residues 30 to 83 are interaction with IFI204; sequence DDPMSLLYNMNDCYSKLKELVPSIPQNKKVTKMEILQHVIDYILDLQIALDSHP. Residues 106 to 115 carry the Nuclear export signal motif; sequence LNTDISILSL.

As to quaternary structure, interacts with GATA4 and NKX2-5. Interacts with NR0B2. Interacts with CLOCK and BMAL1. Interacts with IFI204. Interacts with NEDD9/HEF1. Interacts with ASB4; this interaction promotes ID2 proteasomal degradation. In terms of processing, polyubiquitinated; which is favored by Ifi204 and leads to proteasomal degradation. Ubiquitinated in a ASB4-depedent manner, leading to proteasomal degradation. Post-translationally, phosphorylated in vitro by CDK1, PKA and PKC.

The protein localises to the cytoplasm. The protein resides in the nucleus. In terms of biological role, transcriptional regulator (lacking a basic DNA binding domain) which negatively regulates the basic helix-loop-helix (bHLH) transcription factors by forming heterodimers and inhibiting their DNA binding and transcriptional activity. Implicated in regulating a variety of cellular processes, including cellular growth, senescence, differentiation, apoptosis, angiogenesis, and neoplastic transformation. Inhibits skeletal muscle and cardiac myocyte differentiation. Regulates the circadian clock by repressing the transcriptional activator activity of the CLOCK-BMAL1 heterodimer. Restricts the CLOCK and BMAL1 localization to the cytoplasm. Plays a role in both the input and output pathways of the circadian clock: in the input component, is involved in modulating the magnitude of photic entrainment and in the output component, contributes to the regulation of a variety of liver clock-controlled genes involved in lipid metabolism. The sequence is that of DNA-binding protein inhibitor ID-2 (Id2) from Mus musculus (Mouse).